We begin with the raw amino-acid sequence, 284 residues long: Ubiquinone biosynthesis protein COQ4, mitochondrial (284 aa).

Zn(2+) contacts are provided by H165, D166, H169, and E181.

This sequence belongs to the COQ4 family. As to quaternary structure, component of a multi-subunit COQ enzyme complex, composed of at least COQ3, COQ4, COQ5, COQ6, COQ7 and COQ9. It depends on Zn(2+) as a cofactor.

It is found in the mitochondrion inner membrane. The catalysed reaction is a 4-hydroxy-3-methoxy-5-(all-trans-polyprenyl)benzoate + H(+) = a 2-methoxy-6-(all-trans-polyprenyl)phenol + CO2. The protein operates within cofactor biosynthesis; ubiquinone biosynthesis. Its function is as follows. Lyase that catalyzes the C1-decarboxylation of 4-hydroxy-3-methoxy-5-(all-trans-polyprenyl)benzoic acid into 2-methoxy-6-(all-trans-polyprenyl)phenol during ubiquinone biosynthesis. The chain is Ubiquinone biosynthesis protein COQ4, mitochondrial from Ajellomyces dermatitidis (strain ER-3 / ATCC MYA-2586) (Blastomyces dermatitidis).